A 318-amino-acid polypeptide reads, in one-letter code: UDP-3-O-acylglucosamine N-acyltransferase (318 aa).

The Proton acceptor role is filled by His-230.

The protein belongs to the transferase hexapeptide repeat family. LpxD subfamily. As to quaternary structure, homotrimer.

The catalysed reaction is a UDP-3-O-[(3R)-3-hydroxyacyl]-alpha-D-glucosamine + a (3R)-hydroxyacyl-[ACP] = a UDP-2-N,3-O-bis[(3R)-3-hydroxyacyl]-alpha-D-glucosamine + holo-[ACP] + H(+). It functions in the pathway bacterial outer membrane biogenesis; LPS lipid A biosynthesis. Catalyzes the N-acylation of UDP-3-O-acylglucosamine using 3-hydroxyacyl-ACP as the acyl donor. Is involved in the biosynthesis of lipid A, a phosphorylated glycolipid that anchors the lipopolysaccharide to the outer membrane of the cell. The protein is UDP-3-O-acylglucosamine N-acyltransferase of Wolinella succinogenes (strain ATCC 29543 / DSM 1740 / CCUG 13145 / JCM 31913 / LMG 7466 / NCTC 11488 / FDC 602W) (Vibrio succinogenes).